The primary structure comprises 386 residues: Short integuments 2, mitochondrial (386 aa).

A CP-type G domain is found at 37 to 207 (TRAIRNRLKL…VLDSPGVLVP (171 aa)). The short motif at 55–59 (DARIP) is the DARXP motif element. The interval 81–84 (NKKD) is G4. Residues 81–84 (NKKD), 109–110 (NA), and 146–151 (NVGKSA) contribute to the GTP site. Residues 109 to 111 (NAH) are G5. The G1 stretch occupies residues 143–150 (GVPNVGKS). A G2 region spans residues 180-184 (GVTQD). The G3 stretch occupies residues 200-203 (DSPG). Gly-203 serves as a coordination point for GTP.

The protein belongs to the TRAFAC class YlqF/YawG GTPase family. MTG1 subfamily. As to expression, expressed in seedlings, roots, leaves, stems, inflorescences and siliques.

Its subcellular location is the mitochondrion. Functionally, GTPase that may function in mitochondrial ribosome assembly. Involved in a variety of growth processes during vegetative development and promotes growth and cell division in the developing integuments. The chain is Short integuments 2, mitochondrial from Arabidopsis thaliana (Mouse-ear cress).